Reading from the N-terminus, the 199-residue chain is Inner membrane protein E199L (199 aa).

A glycan (N-linked (GlcNAc...) asparagine; by host) is linked at Asn-131. Residues 150–170 (INVMNHPFLTLILIILILVII) form a helical membrane-spanning segment.

It belongs to the asfivirus E199L family. In terms of assembly, interacts with host PYCR2; this interaction results in autophagy activation. In terms of processing, contains intramolecular disulfide bonds.

The protein resides in the virion membrane. It localises to the host membrane. Its function is as follows. Essential for viral fusion with host endosomal membrane and core release. Not required for virus morphogenesis and egress. Induces complete autophagy through the interaction with and down-regulation of host PYCR2. This chain is Inner membrane protein E199L, found in African swine fever virus (isolate Tick/Malawi/Lil 20-1/1983) (ASFV).